We begin with the raw amino-acid sequence, 443 residues long: Ribosomal protein uS12 methylthiotransferase RimO (443 aa).

An MTTase N-terminal domain is found at 8–118; sequence PKIGFVSLGC…VLSHIHHYVP (111 aa). [4Fe-4S] cluster-binding residues include C17, C53, C82, C150, C154, and C157. The 238-residue stretch at 136–373 folds into the Radical SAM core domain; that stretch reads LTPRHYAYLK…MQLQQQISTE (238 aa). Residues 376-442 enclose the TRAM domain; sequence QEKIGKVLPV…EYDLWGTIVE (67 aa).

The protein belongs to the methylthiotransferase family. RimO subfamily. [4Fe-4S] cluster is required as a cofactor.

The protein resides in the cytoplasm. The catalysed reaction is L-aspartate(89)-[ribosomal protein uS12]-hydrogen + (sulfur carrier)-SH + AH2 + 2 S-adenosyl-L-methionine = 3-methylsulfanyl-L-aspartate(89)-[ribosomal protein uS12]-hydrogen + (sulfur carrier)-H + 5'-deoxyadenosine + L-methionine + A + S-adenosyl-L-homocysteine + 2 H(+). Catalyzes the methylthiolation of an aspartic acid residue of ribosomal protein uS12. This Proteus mirabilis (strain HI4320) protein is Ribosomal protein uS12 methylthiotransferase RimO.